A 749-amino-acid polypeptide reads, in one-letter code: Ribosome-releasing factor 2, mitochondrial (749 aa).

Residues 1 to 22 constitute a mitochondrion transit peptide; that stretch reads MLLLLCNRSVVPRGIRRILRTA. Positions 44–322 constitute a tr-type G domain; it reads KNIRNIGILA…AVLKYLPAPN (279 aa). GTP-binding positions include 53 to 60, 117 to 121, and 171 to 174; these read AHIDGGKT, DTPGH, and NKMD.

The protein belongs to the TRAFAC class translation factor GTPase superfamily. Classic translation factor GTPase family. EF-G/EF-2 subfamily.

Its subcellular location is the mitochondrion. In terms of biological role, mitochondrial GTPase that mediates the disassembly of ribosomes from messenger RNA at the termination of mitochondrial protein biosynthesis. Not involved in the GTP-dependent ribosomal translocation step during translation elongation. This is Ribosome-releasing factor 2, mitochondrial from Culex quinquefasciatus (Southern house mosquito).